The chain runs to 182 residues: UPF0397 protein VS_II0189 (182 aa).

Transmembrane regions (helical) follow at residues 8 to 28 (VVVI…MFGV), 41 to 61 (AVLA…VGFI), 72 to 92 (WGVW…IGLF), 110 to 130 (FALF…SSAF), and 146 to 166 (QLSI…FLIL).

Belongs to the UPF0397 family.

The protein resides in the cell membrane. In Vibrio atlanticus (strain LGP32) (Vibrio splendidus (strain Mel32)), this protein is UPF0397 protein VS_II0189.